Reading from the N-terminus, the 288-residue chain is Formamidopyrimidine-DNA glycosylase (288 aa).

Proline 2 (schiff-base intermediate with DNA) is an active-site residue. Glutamate 3 acts as the Proton donor in catalysis. The active-site Proton donor; for beta-elimination activity is lysine 58. Positions 101, 124, and 169 each coordinate DNA. Residues 254–288 form an FPG-type zinc finger; the sequence is LVYDRAGLPCRVCGTPIRQIVQGQRSTFYCPACQR. Residue arginine 278 is the Proton donor; for delta-elimination activity of the active site.

Belongs to the FPG family. In terms of assembly, monomer. The cofactor is Zn(2+).

It carries out the reaction Hydrolysis of DNA containing ring-opened 7-methylguanine residues, releasing 2,6-diamino-4-hydroxy-5-(N-methyl)formamidopyrimidine.. The catalysed reaction is 2'-deoxyribonucleotide-(2'-deoxyribose 5'-phosphate)-2'-deoxyribonucleotide-DNA = a 3'-end 2'-deoxyribonucleotide-(2,3-dehydro-2,3-deoxyribose 5'-phosphate)-DNA + a 5'-end 5'-phospho-2'-deoxyribonucleoside-DNA + H(+). Functionally, involved in base excision repair of DNA damaged by oxidation or by mutagenic agents. Acts as a DNA glycosylase that recognizes and removes damaged bases. Has a preference for oxidized purines, such as 7,8-dihydro-8-oxoguanine (8-oxoG). Has AP (apurinic/apyrimidinic) lyase activity and introduces nicks in the DNA strand. Cleaves the DNA backbone by beta-delta elimination to generate a single-strand break at the site of the removed base with both 3'- and 5'-phosphates. This Ralstonia nicotianae (strain ATCC BAA-1114 / GMI1000) (Ralstonia solanacearum) protein is Formamidopyrimidine-DNA glycosylase.